The chain runs to 467 residues: Ethanolamine-phosphate phospho-lyase homolog 1 (467 aa).

K307 carries the N6-(pyridoxal phosphate)lysine modification.

Belongs to the class-III pyridoxal-phosphate-dependent aminotransferase family. It depends on pyridoxal 5'-phosphate as a cofactor.

This is Ethanolamine-phosphate phospho-lyase homolog 1 from Caenorhabditis elegans.